Here is a 250-residue protein sequence, read N- to C-terminus: Ribonuclease 3 (250 aa).

The segment covering 1–15 has biased composition (basic residues); that stretch reads MTKTPAKKKRARSSK. The disordered stretch occupies residues 1 to 21; the sequence is MTKTPAKKKRARSSKAKGTDA. Residues 22–150 enclose the RNase III domain; that stretch reads NAALEARIGH…VIGAIFLDGG (129 aa). Mg(2+) is bound at residue glutamate 63. Aspartate 67 is an active-site residue. Residues aspartate 136 and glutamate 139 each contribute to the Mg(2+) site. Glutamate 139 is a catalytic residue. Residues 175–244 form the DRBM domain; the sequence is DPKTVLQEWA…ASVMIEREGV (70 aa).

This sequence belongs to the ribonuclease III family. In terms of assembly, homodimer. Mg(2+) serves as cofactor.

Its subcellular location is the cytoplasm. The enzyme catalyses Endonucleolytic cleavage to 5'-phosphomonoester.. Digests double-stranded RNA. Involved in the processing of primary rRNA transcript to yield the immediate precursors to the large and small rRNAs (23S and 16S). Processes some mRNAs, and tRNAs when they are encoded in the rRNA operon. Processes pre-crRNA and tracrRNA of type II CRISPR loci if present in the organism. In Bradyrhizobium diazoefficiens (strain JCM 10833 / BCRC 13528 / IAM 13628 / NBRC 14792 / USDA 110), this protein is Ribonuclease 3.